A 178-amino-acid polypeptide reads, in one-letter code: uncharacterized protein (178 aa).

2 disordered regions span residues 89-115 (NEEQ…RLSI) and 136-178 (DMPT…EIKA). The span at 98–109 (ASHGSTSSATST) shows a compositional bias: low complexity. The span at 167 to 178 (DSDEEEEEEIKA) shows a compositional bias: acidic residues.

It localises to the cytoplasm. The protein resides in the nucleus. This is an uncharacterized protein from Schizosaccharomyces pombe (strain 972 / ATCC 24843) (Fission yeast).